Here is a 361-residue protein sequence, read N- to C-terminus: Glutamine synthetase (361 aa).

The region spanning 23–103 (CQAMYIWVDG…VLCETYKYNK (81 aa)) is the GS beta-grasp domain. The GS catalytic domain maps to 110–361 (QRWKCMEVMT…LVRTICLNEQ (252 aa)). E131 is an ATP binding site. Residues E131, E133, and E200 each coordinate Mn(2+). 200–205 (EFQVGP) contributes to the ATP binding site. Residue 243-244 (DW) participates in L-glutamate binding. Mn(2+) is bound at residue H250. ATP contacts are provided by residues 252 to 254 (NFS), R316, and R321. Residue R316 coordinates L-glutamate. Residue 333–335 (YLE) participates in ADP binding. Residue E335 participates in Mn(2+) binding. R337 is an L-glutamate binding site.

Belongs to the glutamine synthetase family. Mg(2+) is required as a cofactor. The cofactor is Mn(2+).

The protein resides in the cytoplasm. It is found in the cytosol. It localises to the microsome. The protein localises to the mitochondrion. It carries out the reaction L-glutamate + NH4(+) + ATP = L-glutamine + ADP + phosphate + H(+). Functionally, glutamine synthetase that catalyzes the ATP-dependent conversion of glutamate and ammonia to glutamine. The polypeptide is Glutamine synthetase (Panulirus argus (Caribbean spiny lobster)).